Reading from the N-terminus, the 795-residue chain is MPVTKKSQILVVRGQVIFPFVPFSLDVGRPRSRKIIKALKTLKTKRLVLVTQKFTGEQNPEFNDIYHVGTLCEIDEIVDVPGVDSKTVDYRIKGRGLQRVLIEKFSDADINEVSYQLLNSTVKDEANVDRFLQRIFPEKEEIEQLMEGAEKFLELENISKTVNVPKGLKQLDIITFKLANLVPNTESIKQAILEENEIANRLEKIIQAGIEDLQKIQDYGRSKNKETEFDKLDSKITRKINEQLSRQQRDFYLREKLRIIREEIGISSKKEDEVASIRKKLDENPYPEAIKKRILSELEHYENSSSSSQESTLTKTYIDTLLNLPWWQKSKDNSDVKNLIKTLDKNHTGLDKVKERIVEYLAVQLRTQKNKGPIMCLVGPPGVGKSSLAKSIAEALDKKFVKISLGGVHDESEIRGHRKTYLGSMPGRILKGMTRAKVINPLFLLDEIDKMTSSNQGYPSGALLEVLDPELNNKFSDNYVEEDYDLSKVMFIATANYIEDIPEALLDRMEIIELTSYTEQEKIEIAKNHLIKRCLEDADLNSEELKFTDEAISYIIKFYTREAGVRQLERLIQQVVRKYIVAMQKDGIKQETIDVNAVKKYLKKEIFDHTMRDEVSLPGIVNGMAYTPTGGDLLPIEVTHVAGKGELILTGNLKQTMRESANVALGYVKANAERFNINPSLFKKIDINIHVPGGGIPKDGPSAGAALVTAIISSLTGKKVDPTVAMTGEITLRGKVLVIGGVKEKTISAYRGGVTTIFMPEKNERYLDEVPKEIVDKLNIIFVKEYSDIYNKLFS.

Residues 7 to 213 enclose the Lon N-terminal domain; it reads SQILVVRGQV…KIIQAGIEDL (207 aa). Position 379–386 (379–386) interacts with ATP; the sequence is GPPGVGKS. Residues 615-795 enclose the Lon proteolytic domain; the sequence is VSLPGIVNGM…YSDIYNKLFS (181 aa). Active-site residues include serine 702 and lysine 745.

It belongs to the peptidase S16 family. Homohexamer. Organized in a ring with a central cavity.

The protein localises to the cytoplasm. The catalysed reaction is Hydrolysis of proteins in presence of ATP.. Functionally, ATP-dependent serine protease that mediates the selective degradation of mutant and abnormal proteins as well as certain short-lived regulatory proteins. Required for cellular homeostasis and for survival from DNA damage and developmental changes induced by stress. Degrades polypeptides processively to yield small peptide fragments that are 5 to 10 amino acids long. Binds to DNA in a double-stranded, site-specific manner. This is Lon protease from Mycoplasma genitalium (strain ATCC 33530 / DSM 19775 / NCTC 10195 / G37) (Mycoplasmoides genitalium).